Reading from the N-terminus, the 213-residue chain is 5-oxoprolinase subunit B (213 aa).

The protein belongs to the PxpB family. In terms of assembly, forms a complex composed of PxpA, PxpB and PxpC.

It catalyses the reaction 5-oxo-L-proline + ATP + 2 H2O = L-glutamate + ADP + phosphate + H(+). Functionally, catalyzes the cleavage of 5-oxoproline to form L-glutamate coupled to the hydrolysis of ATP to ADP and inorganic phosphate. This chain is 5-oxoprolinase subunit B, found in Haemophilus influenzae (strain ATCC 51907 / DSM 11121 / KW20 / Rd).